Here is a 947-residue protein sequence, read N- to C-terminus: Bifunctional glutamine synthetase adenylyltransferase/adenylyl-removing enzyme (947 aa).

Positions 1 to 440 are adenylyl removase; sequence MTPLSSPLRQ…VFNELIGDDE (440 aa). Positions 450–947 are adenylyl transferase; the sequence is SEPWREVWQD…ASWRKWLVAV (498 aa).

This sequence belongs to the GlnE family. Mg(2+) serves as cofactor.

It catalyses the reaction [glutamine synthetase]-O(4)-(5'-adenylyl)-L-tyrosine + phosphate = [glutamine synthetase]-L-tyrosine + ADP. It carries out the reaction [glutamine synthetase]-L-tyrosine + ATP = [glutamine synthetase]-O(4)-(5'-adenylyl)-L-tyrosine + diphosphate. Involved in the regulation of glutamine synthetase GlnA, a key enzyme in the process to assimilate ammonia. When cellular nitrogen levels are high, the C-terminal adenylyl transferase (AT) inactivates GlnA by covalent transfer of an adenylyl group from ATP to specific tyrosine residue of GlnA, thus reducing its activity. Conversely, when nitrogen levels are low, the N-terminal adenylyl removase (AR) activates GlnA by removing the adenylyl group by phosphorolysis, increasing its activity. The regulatory region of GlnE binds the signal transduction protein PII (GlnB) which indicates the nitrogen status of the cell. In Salmonella arizonae (strain ATCC BAA-731 / CDC346-86 / RSK2980), this protein is Bifunctional glutamine synthetase adenylyltransferase/adenylyl-removing enzyme.